The chain runs to 21 residues: Peptide PGLa-R2 (21 aa).

At leucine 21 the chain carries Leucine amide.

Expressed by the skin glands.

The protein resides in the secreted. In terms of biological role, antimicrobial peptide. The polypeptide is Peptide PGLa-R2 (Xenopus ruwenzoriensis (Uganda clawed frog)).